The chain runs to 134 residues: Large ribosomal subunit protein bL20 (134 aa).

This sequence belongs to the bacterial ribosomal protein bL20 family.

Its function is as follows. Binds directly to 23S ribosomal RNA and is necessary for the in vitro assembly process of the 50S ribosomal subunit. It is not involved in the protein synthesizing functions of that subunit. The sequence is that of Large ribosomal subunit protein bL20 from Rhizobium leguminosarum bv. trifolii (strain WSM2304).